The chain runs to 373 residues: Ca(2+)/H(+) antiporter (373 aa).

11 helical membrane-spanning segments follow: residues 6-26 (TIFF…WLHW), 29-49 (VSIF…MGEA), 61-81 (LGGL…AFIA), 94-114 (ITGS…LLGG), 134-154 (MNLA…SNGI), 162-182 (LSVA…LFSM), 220-240 (FWLG…ELLV), 249-269 (SLGL…GNAA), 291-311 (VGST…AGWI), 318-338 (LDFN…ANSI), and 349-369 (GSLL…HPVV).

This sequence belongs to the Ca(2+):cation antiporter (CaCA) (TC 2.A.19) family. Cation/proton exchanger (CAX) subfamily.

It localises to the cell inner membrane. Its function is as follows. Ca(+)/H(+) antiporter that extrudes calcium in exchange for external protons. Plays an important role in salt tolerance. Does not transport sodium or lithium. The polypeptide is Ca(2+)/H(+) antiporter (Aphanothece halophytica).